The following is a 269-amino-acid chain: Formamidopyrimidine-DNA glycosylase (269 aa).

The active-site Schiff-base intermediate with DNA is proline 2. The Proton donor role is filled by glutamate 3. Lysine 57 (proton donor; for beta-elimination activity) is an active-site residue. Positions 90, 109, and 150 each coordinate DNA. The FPG-type zinc-finger motif lies at 235–269; that stretch reads QVYGRKGEPCRVCGTPIVATKHAQRATFYCRQCQK. The active-site Proton donor; for delta-elimination activity is arginine 259.

Belongs to the FPG family. Monomer. Zn(2+) serves as cofactor.

It carries out the reaction Hydrolysis of DNA containing ring-opened 7-methylguanine residues, releasing 2,6-diamino-4-hydroxy-5-(N-methyl)formamidopyrimidine.. The enzyme catalyses 2'-deoxyribonucleotide-(2'-deoxyribose 5'-phosphate)-2'-deoxyribonucleotide-DNA = a 3'-end 2'-deoxyribonucleotide-(2,3-dehydro-2,3-deoxyribose 5'-phosphate)-DNA + a 5'-end 5'-phospho-2'-deoxyribonucleoside-DNA + H(+). Functionally, involved in base excision repair of DNA damaged by oxidation or by mutagenic agents. Acts as a DNA glycosylase that recognizes and removes damaged bases. Has a preference for oxidized purines, such as 7,8-dihydro-8-oxoguanine (8-oxoG). Has AP (apurinic/apyrimidinic) lyase activity and introduces nicks in the DNA strand. Cleaves the DNA backbone by beta-delta elimination to generate a single-strand break at the site of the removed base with both 3'- and 5'-phosphates. The sequence is that of Formamidopyrimidine-DNA glycosylase from Escherichia coli O7:K1 (strain IAI39 / ExPEC).